The following is a 241-amino-acid chain: Superoxide dismutase [Mn] 2, mitochondrial (241 aa).

Residues His-60, His-108, Asp-197, and His-201 each coordinate Mn(2+).

Belongs to the iron/manganese superoxide dismutase family. Homotetramer. Requires Mn(2+) as cofactor.

The protein resides in the mitochondrion matrix. It catalyses the reaction 2 superoxide + 2 H(+) = H2O2 + O2. Destroys superoxide anion radicals which are normally produced within the cells and which are toxic to biological systems. The protein is Superoxide dismutase [Mn] 2, mitochondrial (MSD2) of Arabidopsis thaliana (Mouse-ear cress).